Reading from the N-terminus, the 71-residue chain is Natterin-P (71 aa).

An N-terminal signal peptide occupies residues 1-18 (MKLLVLLVTLLVLSWTSA). Residues 19 to 45 (EDLGDQEILENNEDNNHESELGEPAAQ) constitute a propeptide that is removed on maturation. A compositionally biased stretch (acidic residues) spans 22–31 (GDQEILENNE). The tract at residues 22–54 (GDQEILENNEDNNHESELGEPAAQHTDDETSQL) is disordered. An intrachain disulfide couples Cys-62 to Cys-71.

It belongs to the natterin family. In terms of tissue distribution, expressed by the venom gland.

It localises to the secreted. With respect to regulation, inhibited by tissue-kallikrein inhibitor TKI and trasylol. Plasma kallikrein inhibitor PKSI527 and classical inhibitors of serine-, metallo-, thiol- or aspartate-peptidases evokes a minor inhibition of the peptide digestion. Functionally, shows nociceptive, edema-inducing and kininogenase activity with release of kallidin from low molecular weight kininogen. The cleavage occurs at Met-Lys bonds. This Thalassophryne nattereri (Copper Joe toadfish) protein is Natterin-P.